Reading from the N-terminus, the 378-residue chain is Queuine tRNA-ribosyltransferase (378 aa).

Asp-89 functions as the Proton acceptor in the catalytic mechanism. Substrate-binding positions include 89–93 (DSGGF), Asp-143, Gln-194, and Gly-221. The interval 252 to 258 (GVGTPAN) is RNA binding. Catalysis depends on Asp-271, which acts as the Nucleophile. Residues 276-280 (ARNGR) are RNA binding; important for wobble base 34 recognition. Zn(2+) is bound by residues Cys-309, Cys-311, Cys-314, and His-340.

Belongs to the queuine tRNA-ribosyltransferase family. Homodimer. Within each dimer, one monomer is responsible for RNA recognition and catalysis, while the other monomer binds to the replacement base PreQ1. Zn(2+) is required as a cofactor.

It carries out the reaction 7-aminomethyl-7-carbaguanine + guanosine(34) in tRNA = 7-aminomethyl-7-carbaguanosine(34) in tRNA + guanine. It participates in tRNA modification; tRNA-queuosine biosynthesis. Functionally, catalyzes the base-exchange of a guanine (G) residue with the queuine precursor 7-aminomethyl-7-deazaguanine (PreQ1) at position 34 (anticodon wobble position) in tRNAs with GU(N) anticodons (tRNA-Asp, -Asn, -His and -Tyr). Catalysis occurs through a double-displacement mechanism. The nucleophile active site attacks the C1' of nucleotide 34 to detach the guanine base from the RNA, forming a covalent enzyme-RNA intermediate. The proton acceptor active site deprotonates the incoming PreQ1, allowing a nucleophilic attack on the C1' of the ribose to form the product. After dissociation, two additional enzymatic reactions on the tRNA convert PreQ1 to queuine (Q), resulting in the hypermodified nucleoside queuosine (7-(((4,5-cis-dihydroxy-2-cyclopenten-1-yl)amino)methyl)-7-deazaguanosine). The chain is Queuine tRNA-ribosyltransferase from Lachnoclostridium phytofermentans (strain ATCC 700394 / DSM 18823 / ISDg) (Clostridium phytofermentans).